Here is a 689-residue protein sequence, read N- to C-terminus: MNRARLQLASLWLLLTVTLQAVASAMGTTEREMDVKALIRVTPLQAEESGGVGQGNLTLEGLFARVAEISPAEGRLLQFHPLSLCNTSEDDQTKPGFISIVKLETPDRDTQPCLSLANKARLAGERGAHAVLFDITNDRGALQQLQQPAGINQPVVLIWGPDAEKLMDVVNKNKEALVKIEVQEQPKWLHHDIWILLTVAGTVMFFVLYAVARLLCRQPPPQDSIQQQTLLAISRLGTRRYQQRMLKDQRASGGWVETASTSSSVPVCAICLEEFTDGQELRILPCCHEYHLGCVDPWLRQNHTCPLCMYDILDSGTPPRPLAHRAPSQTQLWGRYPGSARLMSHLPPHGTPMVFPTPNNSLFLPRAPYYLDHTHHWQMPEQMAMQMRTHRRGAEGTRELGISPGCQDSSGYLPDDPGSDSSSGPCHGSSSENCTDISLHCLHGTSSSSVHSSQSNQEDSSPPALASYLLPQGELPALNPLLSTQASYASHVHFHQHRHHHYRRNQPSMSHSHPHRSKRRTKVSRADPSYYREHRHTTGANGELRSLMVRREPRPSCSRTCFDPRTNREHPRHQQSMPQAASVVQGSSEPDVATSLRGSRTDPPSRTYRKKKSSAPSHLPLLYSPRHCHPANSVQMSESSHPRWAEEVRLLHSRVNSHRENTAMMHLYHPPHHNQGATEEIEAVCEHAV.

The signal sequence occupies residues 1–27 (MNRARLQLASLWLLLTVTLQAVASAMG). Topologically, residues 28-191 (TTEREMDVKA…VQEQPKWLHH (164 aa)) are extracellular. Residues N56 and N86 are each glycosylated (N-linked (GlcNAc...) asparagine). C85 and C113 are joined by a disulfide. A helical transmembrane segment spans residues 192-212 (DIWILLTVAGTVMFFVLYAVA). The Cytoplasmic portion of the chain corresponds to 213 to 689 (RLLCRQPPPQ…EIEAVCEHAV (477 aa)). Residues 268–308 (CAICLEEFTDGQELRILPCCHEYHLGCVDPWLRQNHTCPLC) form an RING-type; atypical zinc finger. 3 disordered regions span residues 386-430 (QMRT…HGSS), 445-467 (TSSS…ALAS), and 492-639 (VHFH…MSES). 2 stretches are compositionally biased toward low complexity: residues 408-430 (DSSG…HGSS) and 446-461 (SSSS…EDSS). Basic residues-rich tracts occupy residues 492 to 504 (VHFH…HYRR) and 512 to 523 (SHPHRSKRRTKV). The span at 574-588 (QQSMPQAASVVQGSS) shows a compositional bias: polar residues.

Belongs to the ZNRF3 family.

The protein localises to the cell membrane. The protein resides in the endoplasmic reticulum membrane. It is found in the nucleus envelope. It catalyses the reaction S-ubiquitinyl-[E2 ubiquitin-conjugating enzyme]-L-cysteine + [acceptor protein]-L-lysine = [E2 ubiquitin-conjugating enzyme]-L-cysteine + N(6)-ubiquitinyl-[acceptor protein]-L-lysine.. The protein operates within protein modification; protein ubiquitination. Its function is as follows. E3 ubiquitin-protein ligase that acts as a negative regulator of the Wnt signaling pathway by mediating the ubiquitination, endocytosis and subsequent degradation of Wnt receptor complex components Frizzled. Acts on both canonical and non-canonical Wnt signaling pathway. Along with RSPO2 and ZNRF3, constitutes a master switch that governs limb specification. In Xenopus tropicalis (Western clawed frog), this protein is E3 ubiquitin-protein ligase RNF43 (rnf43).